The following is a 647-amino-acid chain: Putative ferric-chelate reductase 1 homolog (647 aa).

The chain crosses the membrane as a helical span at residues 10-30; sequence WLATLVTALLAVAIWPDPGQS. The Reelin domain maps to 25 to 195; sequence PDPGQSLPQG…AAPPLPTQSP (171 aa). Asn-127 and Asn-158 each carry an N-linked (GlcNAc...) asparagine glycan. The DOMON domain occupies 245-368; the sequence is TKSCTSITVV…GKYHLLVASG (124 aa). The Cytochrome b561 domain occupies 372–570; that stretch reads KENSVGYHDI…HLIFSIGGMA (199 aa). The helical transmembrane segment at 408–428 threads the bilayer; it reads LHGAFMIAAWIGTTSLGIIFA. Heme b contacts are provided by His-409 and His-450. A run of 5 helical transmembrane segments spans residues 452–472, 480–500, 515–535, 548–568, and 616–636; these read LLMVTTWSLTVAAYVLIWVEL, HSIIGLITVILCFIQPIGALF, GHWLGGNLAHILGIVTIFFSV, WILVSFVVVHVLVHLIFSIGG, and LLGVYGVVLILFVTVLILLVV. His-480 and His-516 together coordinate heme b.

This sequence belongs to the FRRS1 family. The cofactor is heme b.

It is found in the membrane. Its function is as follows. Putative ferric-chelate reductases reduce Fe(3+) to Fe(2+) before its transport from the endosome to the cytoplasm. This is Putative ferric-chelate reductase 1 homolog from Drosophila melanogaster (Fruit fly).